Consider the following 494-residue polypeptide: Glutamate decarboxylase 5 (494 aa).

Residue Lys276 is modified to N6-(pyridoxal phosphate)lysine.

Belongs to the group II decarboxylase family. Homohexamer. Interacts with calmodulin. The cofactor is pyridoxal 5'-phosphate. In terms of tissue distribution, expressed in flowers.

The enzyme catalyses L-glutamate + H(+) = 4-aminobutanoate + CO2. Its function is as follows. Catalyzes the production of GABA. The calmodulin-binding is calcium-dependent and it is proposed that this may, directly or indirectly, form a calcium regulated control of GABA biosynthesis. In Arabidopsis thaliana (Mouse-ear cress), this protein is Glutamate decarboxylase 5 (GAD5).